The following is a 351-amino-acid chain: F-box protein At1g47810 (351 aa).

The F-box domain maps to 8-54 (LQSLDPIPVDVLFEIFLNLPAKFLARFVCVSKLWAKIIRNQDFIRSF).

This chain is F-box protein At1g47810, found in Arabidopsis thaliana (Mouse-ear cress).